A 593-amino-acid chain; its full sequence is MSNIVVSNETKSQSVRTTKDGRQIRYNLQVIQQPERARACGSGAKSSADRRPVDPPPIVELRVFENDQEITFAYNANFFLHASLENARTIAPGRAPSTAGPSFPVLTGTPVAGMAYLDRPTPAGYFIFPDLSVRHEGKYRLSFALFENLAEVKDLDPEDPDVIYDGNHFVTHRCEVKSAPFTVFSAKKFPGLSESTALSRMVAEQGCRVRIRRDVRMRRRENKSSKEWDEYDEEGGGYDRARGTATPDNYGQAPNAPLGDRPRSLSSASNPALAPPRRPSIEEMGHGYSASNGYQQQMPPPQTPAYAQMPSYGSNQPQYSQQYQTPQPAPMMQPPQPPQHSTPYSQHSQHSSYSSQHQAQPPVPMNQQYGYSNYQQQPQQPQSQSQPQYDHAAPPRQEQMSSDYAHPSDYRRSSITQSPAQQYTASSHPVQPYHPMDQYGRSQQMSQPLHSSPQSYASSAPSHQSLPSLRPIVADKLEPVSPSYQSPPTSMSAAISVNSDGSNQHYALPKFNPQTQGLPPMSATSNKRSFSSTFDSRHLNERMVAGSRPQPSGAGYSYDPGSPDMEEPMDRAAMSYRRADGTQRQRHVPEVGS.

The segment covering 1 to 16 (MSNIVVSNETKSQSVR) has biased composition (polar residues). The tract at residues 1–21 (MSNIVVSNETKSQSVRTTKDG) is disordered. Residues 21-212 (GRQIRYNLQV…AEQGCRVRIR (192 aa)) form the Velvet domain. Residues 35-40 (ERARAC) carry the Nuclear localization signal motif. A disordered region spans residues 218-569 (RRRENKSSKE…PGSPDMEEPM (352 aa)). The span at 310 to 326 (PSYGSNQPQYSQQYQTP) shows a compositional bias: low complexity. Residues 327–340 (QPAPMMQPPQPPQH) show a composition bias toward pro residues. 2 stretches are compositionally biased toward low complexity: residues 341 to 360 (STPYSQHSQHSSYSSQHQAQ) and 367 to 389 (QQYGYSNYQQQPQQPQSQSQPQY). Composition is skewed to polar residues over residues 413-429 (SSITQSPAQQYTASSHP) and 440-449 (GRSQQMSQPL). The interval 443-487 (QQMSQPLHSSPQSYASSAPSHQSLPSLRPIVADKLEPVSPSYQSP) is PEST. Low complexity predominate over residues 450 to 465 (HSSPQSYASSAPSHQS). Composition is skewed to polar residues over residues 482 to 505 (PSYQSPPTSMSAAISVNSDGSNQH) and 512 to 534 (NPQTQGLPPMSATSNKRSFSSTF).

Belongs to the velvet family. VeA subfamily. Component of the heterotrimeric velvet complex composed of LAE1, VEL1 and VEL2; VEL1 acting as a bridging protein between LAE1 and VEL2.

Its subcellular location is the nucleus. The protein localises to the cytoplasm. Functionally, component of the velvet transcription factor complex that controls sexual/asexual developmental ratio in response to light, promoting sexual development in the darkness while stimulating asexual sporulation under illumination. The velvet complex acts as a global regulator for secondary metabolite gene expression. Controls the expression of the T-toxin gene cluster. Promotes oxidative stress tolerance and acts as a virulence factors during infection. Negatively regulate mycelial pigmentation and controls sexual development, as well as asexual development during vegetative growth. This is Developmental and secondary metabolism regulator VEL1 from Cochliobolus heterostrophus (strain C5 / ATCC 48332 / race O) (Southern corn leaf blight fungus).